Here is a 436-residue protein sequence, read N- to C-terminus: Histidinol dehydrogenase (436 aa).

Residues Tyr-136, Gln-198, and Asn-221 each coordinate NAD(+). Substrate-binding residues include Ser-244, Gln-266, and His-269. Zn(2+)-binding residues include Gln-266 and His-269. Residues Glu-334 and His-335 each act as proton acceptor in the active site. Residues His-335, Asp-368, Glu-422, and His-427 each coordinate substrate. Residue Asp-368 coordinates Zn(2+). His-427 serves as a coordination point for Zn(2+).

The protein belongs to the histidinol dehydrogenase family. Requires Zn(2+) as cofactor.

The catalysed reaction is L-histidinol + 2 NAD(+) + H2O = L-histidine + 2 NADH + 3 H(+). The protein operates within amino-acid biosynthesis; L-histidine biosynthesis; L-histidine from 5-phospho-alpha-D-ribose 1-diphosphate: step 9/9. Functionally, catalyzes the sequential NAD-dependent oxidations of L-histidinol to L-histidinaldehyde and then to L-histidine. This is Histidinol dehydrogenase from Dehalococcoides mccartyi (strain CBDB1).